The sequence spans 329 residues: DNA-directed RNA polymerase subunit alpha (329 aa).

The tract at residues 1-235 (MQGSVTEFLK…EQLEAFVDLR (235 aa)) is alpha N-terminal domain (alpha-NTD). An alpha C-terminal domain (alpha-CTD) region spans residues 249–329 (FDPILLRPVD…NWPPASIADE (81 aa)).

The protein belongs to the RNA polymerase alpha chain family. As to quaternary structure, homodimer. The RNAP catalytic core consists of 2 alpha, 1 beta, 1 beta' and 1 omega subunit. When a sigma factor is associated with the core the holoenzyme is formed, which can initiate transcription.

The catalysed reaction is RNA(n) + a ribonucleoside 5'-triphosphate = RNA(n+1) + diphosphate. DNA-dependent RNA polymerase catalyzes the transcription of DNA into RNA using the four ribonucleoside triphosphates as substrates. This Photorhabdus laumondii subsp. laumondii (strain DSM 15139 / CIP 105565 / TT01) (Photorhabdus luminescens subsp. laumondii) protein is DNA-directed RNA polymerase subunit alpha.